The following is a 176-amino-acid chain: MTTIVSVRRNGHVVIAGDGQATLGNTVMKGNVKKVRRLYNDKVIAGFAGGTADAFTLFELFERKLEMHQGHLVKAAVELAKDWRTDRMLRKLEALLAVADETASLIITGNGDVVQPENDLIAIGSGGPYAQAAARALLENTELSAREIAEKALDIAGDICIYTNHFHTIEELSYKA.

Thr-2 is an active-site residue. The Na(+) site is built by Gly-157, Cys-160, and Thr-163.

This sequence belongs to the peptidase T1B family. HslV subfamily. In terms of assembly, a double ring-shaped homohexamer of HslV is capped on each side by a ring-shaped HslU homohexamer. The assembly of the HslU/HslV complex is dependent on binding of ATP.

The protein localises to the cytoplasm. It carries out the reaction ATP-dependent cleavage of peptide bonds with broad specificity.. With respect to regulation, allosterically activated by HslU binding. Protease subunit of a proteasome-like degradation complex believed to be a general protein degrading machinery. This chain is ATP-dependent protease subunit HslV, found in Escherichia coli O139:H28 (strain E24377A / ETEC).